Consider the following 470-residue polypeptide: AAA-ATPase At5g40000 (470 aa).

Residues 1 to 30 form the signal peptide; the sequence is MMMMGDSFGSIGSSMASLFFLWATIQQIFP. 248–255 contributes to the ATP binding site; that stretch reads GPPGTGKS.

This sequence belongs to the AAA ATPase family. BCS1 subfamily. Mg(2+) serves as cofactor.

The catalysed reaction is ATP + H2O = ADP + phosphate + H(+). The protein is AAA-ATPase At5g40000 of Arabidopsis thaliana (Mouse-ear cress).